A 343-amino-acid polypeptide reads, in one-letter code: 3-hydroxy-3-methylglutaryl-CoA lyase, cytoplasmic (343 aa).

Residue G2 is the site of N-myristoyl glycine attachment. The 268-residue stretch at 48–315 (VKIVEVGPRD…NTGVDLHKVM (268 aa)) folds into the Pyruvate carboxyltransferase domain. A substrate-binding site is contributed by R56. 3 residues coordinate a divalent metal cation: D57, H248, and H250. C281 is an active-site residue. N290 is a binding site for a divalent metal cation.

It belongs to the HMG-CoA lyase family. It depends on a divalent metal cation as a cofactor. Present at high level in duodenum and small intestine (at protein level).

The protein localises to the cytoplasm. Its subcellular location is the cytosol. The protein resides in the endoplasmic reticulum membrane. It catalyses the reaction (3S)-3-hydroxy-3-methylglutaryl-CoA = acetoacetate + acetyl-CoA. It functions in the pathway metabolic intermediate metabolism; (S)-3-hydroxy-3-methylglutaryl-CoA degradation; acetoacetate from (S)-3-hydroxy-3-methylglutaryl-CoA: step 1/1. In terms of biological role, non-mitochondrial 3-hydroxy-3-methylglutaryl-CoA lyase that catalyzes a cation-dependent cleavage of (S)-3-hydroxy-3-methylglutaryl-CoA into acetyl-CoA and acetoacetate, a key step in ketogenesis, the products of which support energy production in nonhepatic animal tissues. In Rattus norvegicus (Rat), this protein is 3-hydroxy-3-methylglutaryl-CoA lyase, cytoplasmic (Hmgcll1).